Reading from the N-terminus, the 876-residue chain is Xylosyltransferase oxt (876 aa).

Residues 1 to 14 (MEQSVSARWLKRYR) are Cytoplasmic-facing. A helical; Signal-anchor for type II membrane protein transmembrane segment spans residues 15–35 (AFFLILLLIVAIQLFLAYKSL). At 36–876 (DIVGGGSGSG…PKSDVDALLK (841 aa)) the chain is on the lumenal side. The interval 48 to 67 (AAEAPASPPPPHAQARVQPP) is disordered. 4 disulfide bridges follow: Cys-83-Cys-111, Cys-127-Cys-465, Cys-484-Cys-497, and Cys-486-Cys-495. N-linked (GlcNAc...) asparagine glycans are attached at residues Asn-131 and Asn-135. Residues 134–228 (ANVSLGCFKD…FYAMNIYETG (95 aa)) enclose the WSC domain. Residues Asp-283 and 312–314 (TIW) each bind UDP-alpha-D-xylose. Asn-342 carries N-linked (GlcNAc...) asparagine glycosylation. Position 415 to 416 (415 to 416 (DW)) interacts with UDP-alpha-D-xylose. UDP-alpha-D-xylose is bound by residues Ser-498 and 522 to 523 (RK). Residues Asn-696 and Asn-725 are each glycosylated (N-linked (GlcNAc...) asparagine). A disulfide bridge connects residues Cys-842 and Cys-855.

This sequence belongs to the glycosyltransferase 14 family. XylT subfamily. The cofactor is Ca(2+). Requires Mn(2+) as cofactor. Mg(2+) serves as cofactor.

The protein resides in the endoplasmic reticulum membrane. The protein localises to the golgi apparatus membrane. It catalyses the reaction UDP-alpha-D-xylose + L-seryl-[protein] = 3-O-(beta-D-xylosyl)-L-seryl-[protein] + UDP + H(+). It functions in the pathway glycan metabolism; chondroitin sulfate biosynthesis. Its pathway is glycan metabolism; heparan sulfate biosynthesis. Its function is as follows. Catalyzes the first step in biosynthesis of glycosaminoglycan. Transfers D-xylose from UDP-D-xylose to specific serine residues of the core protein. This is Xylosyltransferase oxt from Drosophila melanogaster (Fruit fly).